We begin with the raw amino-acid sequence, 100 residues long: NADH-quinone oxidoreductase subunit K (100 aa).

The next 3 membrane-spanning stretches (helical) occupy residues 4-24, 28-48, and 60-80; these read LTHG…GLVI, LLFM…AFVV, and VMYI…LALL.

It belongs to the complex I subunit 4L family. In terms of assembly, NDH-1 is composed of 13 different subunits. Subunits NuoA, H, J, K, L, M, N constitute the membrane sector of the complex.

The protein resides in the cell inner membrane. It carries out the reaction a quinone + NADH + 5 H(+)(in) = a quinol + NAD(+) + 4 H(+)(out). In terms of biological role, NDH-1 shuttles electrons from NADH, via FMN and iron-sulfur (Fe-S) centers, to quinones in the respiratory chain. The immediate electron acceptor for the enzyme in this species is believed to be ubiquinone. Couples the redox reaction to proton translocation (for every two electrons transferred, four hydrogen ions are translocated across the cytoplasmic membrane), and thus conserves the redox energy in a proton gradient. The chain is NADH-quinone oxidoreductase subunit K from Salmonella agona (strain SL483).